The following is a 177-amino-acid chain: ATP synthase subunit delta (177 aa).

Belongs to the ATPase delta chain family. In terms of assembly, F-type ATPases have 2 components, F(1) - the catalytic core - and F(0) - the membrane proton channel. F(1) has five subunits: alpha(3), beta(3), gamma(1), delta(1), epsilon(1). F(0) has three main subunits: a(1), b(2) and c(10-14). The alpha and beta chains form an alternating ring which encloses part of the gamma chain. F(1) is attached to F(0) by a central stalk formed by the gamma and epsilon chains, while a peripheral stalk is formed by the delta and b chains.

It localises to the cell membrane. In terms of biological role, f(1)F(0) ATP synthase produces ATP from ADP in the presence of a proton or sodium gradient. F-type ATPases consist of two structural domains, F(1) containing the extramembraneous catalytic core and F(0) containing the membrane proton channel, linked together by a central stalk and a peripheral stalk. During catalysis, ATP synthesis in the catalytic domain of F(1) is coupled via a rotary mechanism of the central stalk subunits to proton translocation. Its function is as follows. This protein is part of the stalk that links CF(0) to CF(1). It either transmits conformational changes from CF(0) to CF(1) or is implicated in proton conduction. In Streptococcus suis (strain 98HAH33), this protein is ATP synthase subunit delta.